The chain runs to 410 residues: Na(+)/H(+) antiporter NhaA 1/4 (410 aa).

Helical transmembrane passes span valine 16–leucine 36, leucine 55–valine 75, alanine 95–phenylalanine 115, glycine 125–valine 145, phenylalanine 156–cysteine 176, serine 178–leucine 198, alanine 215–valine 235, isoleucine 275–phenylalanine 295, alanine 299–glycine 319, isoleucine 340–leucine 360, and alanine 371–glycine 391.

This sequence belongs to the NhaA Na(+)/H(+) (TC 2.A.33) antiporter family.

It localises to the cell membrane. The enzyme catalyses Na(+)(in) + 2 H(+)(out) = Na(+)(out) + 2 H(+)(in). Na(+)/H(+) antiporter that extrudes sodium in exchange for external protons. This Streptomyces coelicolor (strain ATCC BAA-471 / A3(2) / M145) protein is Na(+)/H(+) antiporter NhaA 1/4.